The sequence spans 402 residues: Deoxyguanosinetriphosphate triphosphohydrolase-like protein (402 aa).

The tract at residues 20–39 (PAFSRGRLVPEPESPTRTPF) is disordered. In terms of domain architecture, HD spans 73-217 (RLTHTIEVAQ…AAIADDIAYN (145 aa)).

Belongs to the dGTPase family. Type 2 subfamily.

This chain is Deoxyguanosinetriphosphate triphosphohydrolase-like protein, found in Brucella ovis (strain ATCC 25840 / 63/290 / NCTC 10512).